The sequence spans 549 residues: Small ribosomal subunit protein bS1 (549 aa).

6 S1 motif domains span residues 21–87, 105–171, 192–260, 277–347, 364–434, and 451–512; these read GSIV…LSRE, KATV…VSRR, GSEV…LGLK, NSKL…LGLK, GDKV…LGIK, and GAVV…LSVK.

This sequence belongs to the bacterial ribosomal protein bS1 family.

In terms of biological role, binds mRNA; thus facilitating recognition of the initiation point. It is needed to translate mRNA with a short Shine-Dalgarno (SD) purine-rich sequence. The sequence is that of Small ribosomal subunit protein bS1 (rpsA) from Haemophilus influenzae (strain ATCC 51907 / DSM 11121 / KW20 / Rd).